A 316-amino-acid polypeptide reads, in one-letter code: Ecto-ADP-ribosyltransferase 5 (316 aa).

The N-terminal stretch at 1–23 is a signal peptide; the sequence is MIQATLLISLSCLSFYTLGSGVR. Cys50 and Cys266 are oxidised to a cystine. Asn68 carries N-linked (GlcNAc...) asparagine glycosylation. The 192-residue stretch at 70 to 261 folds into the TR mART core domain; it reads TRLRESWETA…MTLSSSDQMC (192 aa). An NAD(+)-binding site is contributed by Tyr107. Asn109 is a glycosylation site (N-linked (GlcNAc...) asparagine). The NAD(+) site is built by Arg168 and Gln188. Residue Arg168 is part of the active site. Residue Ser191 is part of the active site. Ser222 contacts NAD(+). Residue Glu229 is part of the active site. N-linked (GlcNAc...) asparagine glycans are attached at residues Asn242 and Asn248.

It belongs to the Arg-specific ADP-ribosyltransferase family.

The protein resides in the secreted. It localises to the membrane. The catalysed reaction is L-arginyl-[protein] + NAD(+) = N(omega)-(ADP-D-ribosyl)-L-arginyl-[protein] + nicotinamide + H(+). This Bos taurus (Bovine) protein is Ecto-ADP-ribosyltransferase 5 (ART5).